The sequence spans 465 residues: Adenosylhomocysteinase (465 aa).

3 residues coordinate substrate: threonine 56, aspartate 131, and glutamate 191. NAD(+) is bound at residue 192 to 194 (TTT). Residues lysine 221 and aspartate 225 each contribute to the substrate site. NAD(+) is bound by residues asparagine 226, 255 to 260 (GYGNVG), glutamate 278, asparagine 313, 334 to 336 (IGH), and asparagine 379.

Belongs to the adenosylhomocysteinase family. The cofactor is NAD(+).

It is found in the cytoplasm. It carries out the reaction S-adenosyl-L-homocysteine + H2O = L-homocysteine + adenosine. Its pathway is amino-acid biosynthesis; L-homocysteine biosynthesis; L-homocysteine from S-adenosyl-L-homocysteine: step 1/1. Functionally, may play a key role in the regulation of the intracellular concentration of adenosylhomocysteine. This Bartonella quintana (strain Toulouse) (Rochalimaea quintana) protein is Adenosylhomocysteinase.